We begin with the raw amino-acid sequence, 110 residues long: Protein RnfH (110 aa).

The tract at residues 86–110 (RQRRVEKSRQEGSVEGRKWLPKDSR) is disordered. Residues 88–110 (RRVEKSRQEGSVEGRKWLPKDSR) show a composition bias toward basic and acidic residues.

It belongs to the UPF0125 (RnfH) family.

This is Protein RnfH from Paraburkholderia phymatum (strain DSM 17167 / CIP 108236 / LMG 21445 / STM815) (Burkholderia phymatum).